A 373-amino-acid polypeptide reads, in one-letter code: Dual-specificity RNA methyltransferase RlmN (373 aa).

The active-site Proton acceptor is the glutamate 94. The Radical SAM core domain maps to 100–339 (EDDRATLCVS…VTIRKTRGDD (240 aa)). Cysteine 107 and cysteine 344 are joined by a disulfide. 3 residues coordinate [4Fe-4S] cluster: cysteine 114, cysteine 118, and cysteine 121. S-adenosyl-L-methionine is bound by residues 168 to 169 (GE), serine 200, 222 to 224 (SLH), and asparagine 301. Cysteine 344 functions as the S-methylcysteine intermediate in the catalytic mechanism.

Belongs to the radical SAM superfamily. RlmN family. [4Fe-4S] cluster serves as cofactor.

The protein localises to the cytoplasm. It catalyses the reaction adenosine(2503) in 23S rRNA + 2 reduced [2Fe-2S]-[ferredoxin] + 2 S-adenosyl-L-methionine = 2-methyladenosine(2503) in 23S rRNA + 5'-deoxyadenosine + L-methionine + 2 oxidized [2Fe-2S]-[ferredoxin] + S-adenosyl-L-homocysteine. It carries out the reaction adenosine(37) in tRNA + 2 reduced [2Fe-2S]-[ferredoxin] + 2 S-adenosyl-L-methionine = 2-methyladenosine(37) in tRNA + 5'-deoxyadenosine + L-methionine + 2 oxidized [2Fe-2S]-[ferredoxin] + S-adenosyl-L-homocysteine. Specifically methylates position 2 of adenine 2503 in 23S rRNA and position 2 of adenine 37 in tRNAs. m2A2503 modification seems to play a crucial role in the proofreading step occurring at the peptidyl transferase center and thus would serve to optimize ribosomal fidelity. The protein is Dual-specificity RNA methyltransferase RlmN of Vibrio cholerae serotype O1 (strain M66-2).